A 240-amino-acid polypeptide reads, in one-letter code: MTAPVPAPRILLPLLLLLLLTPPPGARGEVCMASRGLSLFPESCPDFCCGTCDDQYCCSDVLKKFVWSEERCAVPEASVPASVEPVEQLGSALRFRPGYNDPMSGFGATLAVGLTIFVLSVVTIIICFTCSCCCLYKTCRRPRPVVTTTTSTTVVHAPYPQPPSVPPSYPGPSYQGYHTMPPQPGMPAAPYPMQYPPPYPAQPMGPPAYHETLAGGAAAPYPASQPPYNPAYMDAPKAAL.

An N-terminal signal peptide occupies residues 1–28; the sequence is MTAPVPAPRILLPLLLLLLLTPPPGARG. At 29-105 the chain is on the extracellular side; sequence EVCMASRGLS…RPGYNDPMSG (77 aa). The chain crosses the membrane as a helical span at residues 106 to 126; it reads FGATLAVGLTIFVLSVVTIII. Residues 127–240 lie on the Cytoplasmic side of the membrane; that stretch reads CFTCSCCCLY…AYMDAPKAAL (114 aa).

This sequence belongs to the shisa family. Interacts with PDCD6; PDCD6 can stabilize SHISA5.

The protein localises to the endoplasmic reticulum membrane. The protein resides in the nucleus membrane. In terms of biological role, can induce apoptosis in a caspase-dependent manner and plays a role in p53/TP53-dependent apoptosis. The sequence is that of Protein shisa-5 (SHISA5) from Homo sapiens (Human).